A 498-amino-acid chain; its full sequence is Glycerol kinase (498 aa).

Residue Thr12 coordinates ADP. ATP is bound by residues Thr12, Thr13, and Ser14. Thr12 contacts sn-glycerol 3-phosphate. Residue Arg16 coordinates ADP. Sn-glycerol 3-phosphate contacts are provided by Arg82, Glu83, Tyr134, and Asp243. Glycerol-binding residues include Arg82, Glu83, Tyr134, Asp243, and Gln244. The ADP site is built by Thr265 and Gly308. ATP-binding residues include Thr265, Gly308, Gln312, and Gly411. An ADP-binding site is contributed by Gly411.

Belongs to the FGGY kinase family.

It catalyses the reaction glycerol + ATP = sn-glycerol 3-phosphate + ADP + H(+). Its pathway is polyol metabolism; glycerol degradation via glycerol kinase pathway; sn-glycerol 3-phosphate from glycerol: step 1/1. With respect to regulation, inhibited by fructose 1,6-bisphosphate (FBP). Key enzyme in the regulation of glycerol uptake and metabolism. Catalyzes the phosphorylation of glycerol to yield sn-glycerol 3-phosphate. The sequence is that of Glycerol kinase from Brucella suis biovar 1 (strain 1330).